The primary structure comprises 1103 residues: Platelet-derived growth factor receptor beta (1103 aa).

The signal sequence occupies residues 1–31 (MQVPGTMPAPVLKGQALWLPLLLMLSPQASG). 5 consecutive Ig-like C2-type domains span residues 33–120 (LVIT…YIFV), 129–210 (PVDP…YSLQ), 214–309 (INVS…INVT), 331–403 (HRSR…HEDA), and 416–524 (PVRV…VTVV). Residues 33-532 (LVITPPGPEL…VVPHSLPFKV (500 aa)) are Extracellular-facing. N-linked (GlcNAc...) asparagine glycosylation is found at asparagine 45 and asparagine 89. Intrachain disulfides connect cysteine 54-cysteine 100 and cysteine 149-cysteine 190. 2 N-linked (GlcNAc...) asparagine glycosylation sites follow: asparagine 215 and asparagine 230. Cysteine 235 and cysteine 291 are joined by a disulfide. Asparagine 292, asparagine 307, asparagine 354, asparagine 371, asparagine 468, and asparagine 479 each carry an N-linked (GlcNAc...) asparagine glycan. The cysteines at positions 436 and 508 are disulfide-linked. A helical transmembrane segment spans residues 533 to 553 (VVISAILALVVLTIISLIILI). The Cytoplasmic segment spans residues 554–1103 (MLWQKKPRYE…PRAEAEDSFL (550 aa)). Phosphotyrosine; by autocatalysis is present on residues tyrosine 562, tyrosine 579, and tyrosine 581. In terms of domain architecture, Protein kinase spans 600–962 (LVLGRTLGSG…QLVLLLERLL (363 aa)). Residues 606 to 614 (LGSGAFGQV) and lysine 634 each bind ATP. Residue tyrosine 686 is modified to Phosphotyrosine; by ABL1 and ABL2. Phosphotyrosine; by autocatalysis occurs at positions 716, 740, 751, 763, 771, 775, and 778. The Proton acceptor role is filled by aspartate 826. Tyrosine 857 is subject to Phosphotyrosine; by autocatalysis. A phosphotyrosine; by ABL1 and ABL2 mark is found at tyrosine 934 and tyrosine 970. A phosphotyrosine; by autocatalysis mark is found at tyrosine 1009 and tyrosine 1021. Positions 1017-1103 (GDNDYIIPLP…PRAEAEDSFL (87 aa)) are disordered. The span at 1039–1059 (SSPSLASSTLNEVNTSSTISC) shows a compositional bias: polar residues. Residues 1065 to 1075 (PQEEPEPEPEP) are compositionally biased toward acidic residues. Over residues 1076 to 1086 (QPEPQVVPEPP) the composition is skewed to pro residues.

It belongs to the protein kinase superfamily. Tyr protein kinase family. CSF-1/PDGF receptor subfamily. Interacts with homodimeric PDGFB and PDGFD, and with heterodimers formed by PDGFA and PDGFB. May also interact with homodimeric PDGFC. Monomer in the absence of bound ligand. Interaction with homodimeric PDGFB, heterodimers formed by PDGFA and PDGFB or homodimeric PDGFD, leads to receptor dimerization, where both PDGFRA homodimers and heterodimers with PDGFRB are observed. Interacts with SH2B2/APS. Interacts directly (tyrosine phosphorylated) with SHB. Interacts (tyrosine phosphorylated) with PIK3R1 and RASA1. Interacts (tyrosine phosphorylated) with CBL. Interacts (tyrosine phosphorylated) with SRC and SRC family kinases. Interacts (tyrosine phosphorylated) with PIK3C2B, maybe indirectly. Interacts (tyrosine phosphorylated) with SHC1, GRB7, GRB10 and NCK1. Interaction with GRB2 is mediated by SHC1. Interacts (via C-terminus) with NHERF1. N-glycosylated. Post-translationally, ubiquitinated. After autophosphorylation, the receptor is polyubiquitinated, leading to its degradation. In terms of processing, autophosphorylated on tyrosine residues upon ligand binding. Autophosphorylation occurs in trans, i.e. one subunit of the dimeric receptor phosphorylates tyrosine residues on the other subunit. Phosphorylation at Tyr-579, and to a lesser degree, Tyr-581 is important for interaction with SRC. Phosphorylation at Tyr-716 is important for interaction with GRB2. Phosphorylation at Tyr-740 and Tyr-751 is important for interaction with PIK3R1. Phosphorylation at Tyr-751 is important for interaction with NCK1. Phosphorylation at Tyr-771 and Tyr-857 is important for interaction with RASA1/GAP. Phosphorylation at Tyr-857 is important for efficient phosphorylation of PLCG1 and PTPN11, resulting in increased phosphorylation of AKT1, MAPK1/ERK2 and/or MAPK3/ERK1, PDCD6IP/ALIX and STAM, and in increased cell proliferation. Phosphorylation at Tyr-1009 is important for interaction with PTPN11. Phosphorylation at Tyr-1009 and Tyr-1021 is important for interaction with PLCG1. Dephosphorylated by PTPRJ at Tyr-751, Tyr-857, Tyr-1009 and Tyr-1021. Dephosphorylated by PTPN2 at Tyr-579 and Tyr-1021.

It localises to the cell membrane. It is found in the cytoplasmic vesicle. Its subcellular location is the lysosome lumen. The catalysed reaction is L-tyrosyl-[protein] + ATP = O-phospho-L-tyrosyl-[protein] + ADP + H(+). With respect to regulation, present in an inactive conformation in the absence of bound ligand. Binding of PDGFB and/or PDGFD leads to dimerization and activation by autophosphorylation on tyrosine residues. Functionally, tyrosine-protein kinase that acts as a cell-surface receptor for homodimeric PDGFB and PDGFD and for heterodimers formed by PDGFA and PDGFB, and plays an essential role in the regulation of embryonic development, cell proliferation, survival, differentiation, chemotaxis and migration. Plays an essential role in blood vessel development by promoting proliferation, migration and recruitment of pericytes and smooth muscle cells to endothelial cells. Plays a role in the migration of vascular smooth muscle cells and the formation of neointima at vascular injury sites. Required for normal development of the cardiovascular system. Required for normal recruitment of pericytes (mesangial cells) in the kidney glomerulus, and for normal formation of a branched network of capillaries in kidney glomeruli. Promotes rearrangement of the actin cytoskeleton and the formation of membrane ruffles. Binding of its cognate ligands - homodimeric PDGFB, heterodimers formed by PDGFA and PDGFB or homodimeric PDGFD -leads to the activation of several signaling cascades; the response depends on the nature of the bound ligand and is modulated by the formation of heterodimers between PDGFRA and PDGFRB. Phosphorylates PLCG1, PIK3R1, PTPN11, RASA1/GAP, CBL, SHC1 and NCK1. Activation of PLCG1 leads to the production of the cellular signaling molecules diacylglycerol and inositol 1,4,5-trisphosphate, mobilization of cytosolic Ca(2+) and the activation of protein kinase C. Phosphorylation of PIK3R1, the regulatory subunit of phosphatidylinositol 3-kinase, leads to the activation of the AKT1 signaling pathway. Phosphorylation of SHC1, or of the C-terminus of PTPN11, creates a binding site for GRB2, resulting in the activation of HRAS, RAF1 and down-stream MAP kinases, including MAPK1/ERK2 and/or MAPK3/ERK1. Promotes phosphorylation and activation of SRC family kinases. Promotes phosphorylation of PDCD6IP/ALIX and STAM. Receptor signaling is down-regulated by protein phosphatases that dephosphorylate the receptor and its down-stream effectors, and by rapid internalization of the activated receptor. This is Platelet-derived growth factor receptor beta (PDGFRB) from Canis lupus familiaris (Dog).